The sequence spans 188 residues: Peptidyl-tRNA hydrolase (188 aa).

Phe15 provides a ligand contact to tRNA. The active-site Proton acceptor is His20. Positions 64, 66, and 112 each coordinate tRNA.

This sequence belongs to the PTH family. As to quaternary structure, monomer.

The protein localises to the cytoplasm. It carries out the reaction an N-acyl-L-alpha-aminoacyl-tRNA + H2O = an N-acyl-L-amino acid + a tRNA + H(+). In terms of biological role, hydrolyzes ribosome-free peptidyl-tRNAs (with 1 or more amino acids incorporated), which drop off the ribosome during protein synthesis, or as a result of ribosome stalling. Functionally, catalyzes the release of premature peptidyl moieties from peptidyl-tRNA molecules trapped in stalled 50S ribosomal subunits, and thus maintains levels of free tRNAs and 50S ribosomes. The sequence is that of Peptidyl-tRNA hydrolase from Borreliella burgdorferi (strain ATCC 35210 / DSM 4680 / CIP 102532 / B31) (Borrelia burgdorferi).